Consider the following 150-residue polypeptide: D-aminoacyl-tRNA deacylase (150 aa).

A Gly-cisPro motif, important for rejection of L-amino acids motif is present at residues 138–139; it reads GP.

Belongs to the DTD family. As to quaternary structure, homodimer.

It localises to the cytoplasm. The enzyme catalyses glycyl-tRNA(Ala) + H2O = tRNA(Ala) + glycine + H(+). The catalysed reaction is a D-aminoacyl-tRNA + H2O = a tRNA + a D-alpha-amino acid + H(+). In terms of biological role, an aminoacyl-tRNA editing enzyme that deacylates mischarged D-aminoacyl-tRNAs. Also deacylates mischarged glycyl-tRNA(Ala), protecting cells against glycine mischarging by AlaRS. Acts via tRNA-based rather than protein-based catalysis; rejects L-amino acids rather than detecting D-amino acids in the active site. By recycling D-aminoacyl-tRNA to D-amino acids and free tRNA molecules, this enzyme counteracts the toxicity associated with the formation of D-aminoacyl-tRNA entities in vivo and helps enforce protein L-homochirality. The protein is D-aminoacyl-tRNA deacylase of Azobacteroides pseudotrichonymphae genomovar. CFP2.